We begin with the raw amino-acid sequence, 102 residues long: Keratin-associated protein 25-1 (102 aa).

It belongs to the PMG family. As to quaternary structure, interacts with hair keratins.

In the hair cortex, hair keratin intermediate filaments are embedded in an interfilamentous matrix, consisting of hair keratin-associated proteins (KRTAP), which are essential for the formation of a rigid and resistant hair shaft through their extensive disulfide bond cross-linking with abundant cysteine residues of hair keratins. The matrix proteins include the high-sulfur and high-glycine-tyrosine keratins. The chain is Keratin-associated protein 25-1 (KRTAP25-1) from Homo sapiens (Human).